Here is a 480-residue protein sequence, read N- to C-terminus: Immune evasion protein OPG047 (480 aa).

A BTB domain is found at 10–90; that stretch reads CKNILALSMT…SYTGKVYIDS (81 aa). A BACK domain is found at 125 to 223; the sequence is CVECYMMGIE…NYLSPRGINN (99 aa). Kelch repeat units lie at residues 273 to 319, 320 to 363, 365 to 408, 410 to 447, and 448 to 480; these read VVYL…PANN, KLYV…SINN, IYVM…VFGR, LFLV…IVDN, and KLLL…WDGK.

It belongs to the orthopoxvirus OPG047 family.

Functionally, might have a role in the suppression of host immune response. The protein is Immune evasion protein OPG047 (OPG047) of Vaccinia virus (strain Western Reserve) (VACV).